The sequence spans 151 residues: Transcriptional repressor NrdR (151 aa).

A zinc finger lies at 3-34 (CPFCNAQDTKVIDSRLVSEGSQVRRRRSCNEC). The 91-residue stretch at 49 to 139 (PRLIKSDGRR…VYRSFKDVKE (91 aa)) folds into the ATP-cone domain.

Belongs to the NrdR family. It depends on Zn(2+) as a cofactor.

In terms of biological role, negatively regulates transcription of bacterial ribonucleotide reductase nrd genes and operons by binding to NrdR-boxes. This chain is Transcriptional repressor NrdR, found in Psychromonas ingrahamii (strain DSM 17664 / CCUG 51855 / 37).